We begin with the raw amino-acid sequence, 805 residues long: RFX-like transcription factor daf-19 (805 aa).

Over residues 1–14 (MTNEEPVPSTSSVL) the composition is skewed to polar residues. A disordered region spans residues 1 to 113 (MTNEEPVPST…TPRKKMEPED (113 aa)). A compositionally biased stretch (basic and acidic residues) spans 19–92 (KNVKIETPSR…DSKSLSKETH (74 aa)). Polar residues predominate over residues 93–104 (NTISTRSSSSGT). Residues 260–334 (TVNWLFENYE…YHYYGIRLKD (75 aa)) constitute a DNA-binding region (RFX-type winged-helix).

This sequence belongs to the RFX family. In terms of tissue distribution, ciliated sensory neurons. Expressed in the male tail HOB and RnB neurons but not in male-specific CEM head neurons or other ciliated neurons.

The protein resides in the nucleus. Functionally, probable transcription factor. May regulate some genes of ciliated sensory neurons. May activate the expression of the shared components of sensory cilia, but not the cell-type-specific expression. Together with transcription factor atf-7, involved in regulation of the serotonergic response of ADF neurons to pathogenic food. In terms of biological role, involved in male mating behavior; may play a role in functional specialization of PKD ciliated sensory neurons. This is RFX-like transcription factor daf-19 from Caenorhabditis elegans.